The primary structure comprises 145 residues: uncharacterized protein (145 aa).

The interval 95–119 is disordered; that stretch reads YVDSTSRTPSAKKDMQGLSVSEKQT.

This is an uncharacterized protein from Treponema pallidum (strain Nichols).